The following is a 438-amino-acid chain: tRNA modification GTPase MnmE (438 aa).

Residues Arg19, Glu76, and Lys115 each coordinate (6S)-5-formyl-5,6,7,8-tetrahydrofolate. The region spanning 211–363 (GYKVAIIGRP…LSKELESYLN (153 aa)) is the TrmE-type G domain. Residues 221 to 226 (NVGKSS), 240 to 246 (SETAGTT), and 265 to 268 (DTAG) each bind GTP. Mg(2+) is bound by residues Ser225 and Thr246. Lys438 is a (6S)-5-formyl-5,6,7,8-tetrahydrofolate binding site.

The protein belongs to the TRAFAC class TrmE-Era-EngA-EngB-Septin-like GTPase superfamily. TrmE GTPase family. Homodimer. Heterotetramer of two MnmE and two MnmG subunits. K(+) is required as a cofactor.

It localises to the cytoplasm. Exhibits a very high intrinsic GTPase hydrolysis rate. Involved in the addition of a carboxymethylaminomethyl (cmnm) group at the wobble position (U34) of certain tRNAs, forming tRNA-cmnm(5)s(2)U34. This chain is tRNA modification GTPase MnmE, found in Campylobacter fetus subsp. fetus (strain 82-40).